We begin with the raw amino-acid sequence, 213 residues long: BAG family molecular chaperone regulator 6, mitochondrial (213 aa).

The region spanning 53 to 82 (DDAAAARIQAAFRGHLVRRHAAAVRGADDE) is the IQ domain. The region spanning 75–152 (AVRGADDEAT…GLQEVFDAVL (78 aa)) is the BAG domain.

In terms of assembly, interacts with CAM1-1 under normal conditions. Dissociation of the interaction when calcium-CAM1-1 binding increases under saline-alkaline stress.

The protein resides in the mitochondrion. Its function is as follows. Co-chaperone that regulates stress responses. Acts as a negative regulator of saline-alkaline stress tolerance. May participate in stress response through regulating the homeostasis of iron, manganese and zinc ions. This chain is BAG family molecular chaperone regulator 6, mitochondrial, found in Oryza sativa subsp. japonica (Rice).